The primary structure comprises 190 residues: Isopentenyl-diphosphate Delta-isomerase (190 aa).

Mn(2+)-binding residues include His-27 and His-34. Positions 32 to 166 (ALHLAFSCHV…PWAFSPWLTL (135 aa)) constitute a Nudix hydrolase domain. Cys-69 is an active-site residue. His-71 contributes to the Mn(2+) binding site. Glu-89 lines the Mg(2+) pocket. The Mn(2+) site is built by Glu-116 and Glu-118. Glu-118 is a catalytic residue.

It belongs to the IPP isomerase type 1 family. Mg(2+) is required as a cofactor. Mn(2+) serves as cofactor.

Its subcellular location is the cytoplasm. It carries out the reaction isopentenyl diphosphate = dimethylallyl diphosphate. Its pathway is isoprenoid biosynthesis; dimethylallyl diphosphate biosynthesis; dimethylallyl diphosphate from isopentenyl diphosphate: step 1/1. Functionally, catalyzes the 1,3-allylic rearrangement of the homoallylic substrate isopentenyl (IPP) to its highly electrophilic allylic isomer, dimethylallyl diphosphate (DMAPP). The chain is Isopentenyl-diphosphate Delta-isomerase from Clavibacter sepedonicus (Clavibacter michiganensis subsp. sepedonicus).